The sequence spans 215 residues: 3-isopropylmalate dehydratase small subunit (215 aa).

Belongs to the LeuD family. LeuD type 1 subfamily. In terms of assembly, heterodimer of LeuC and LeuD.

It catalyses the reaction (2R,3S)-3-isopropylmalate = (2S)-2-isopropylmalate. Its pathway is amino-acid biosynthesis; L-leucine biosynthesis; L-leucine from 3-methyl-2-oxobutanoate: step 2/4. Functionally, catalyzes the isomerization between 2-isopropylmalate and 3-isopropylmalate, via the formation of 2-isopropylmaleate. This is 3-isopropylmalate dehydratase small subunit from Ectopseudomonas mendocina (strain ymp) (Pseudomonas mendocina).